The chain runs to 209 residues: Uracil phosphoribosyltransferase (209 aa).

Residues Arg-79, Arg-104, and 131–139 (DPMLATGGS) each bind 5-phospho-alpha-D-ribose 1-diphosphate. Residues Ile-194 and 199–201 (GDA) contribute to the uracil site. Asp-200 is a binding site for 5-phospho-alpha-D-ribose 1-diphosphate.

This sequence belongs to the UPRTase family. Requires Mg(2+) as cofactor.

The catalysed reaction is UMP + diphosphate = 5-phospho-alpha-D-ribose 1-diphosphate + uracil. It participates in pyrimidine metabolism; UMP biosynthesis via salvage pathway; UMP from uracil: step 1/1. Allosterically activated by GTP. Its function is as follows. Catalyzes the conversion of uracil and 5-phospho-alpha-D-ribose 1-diphosphate (PRPP) to UMP and diphosphate. This is Uracil phosphoribosyltransferase from Streptococcus pneumoniae serotype 4 (strain ATCC BAA-334 / TIGR4).